A 359-amino-acid chain; its full sequence is NADH-quinone oxidoreductase subunit H (359 aa).

8 helical membrane-spanning segments follow: residues 16 to 36 (IWPA…CVLL), 94 to 114 (GLFV…WAVI), 129 to 149 (LLFL…AGWA), 167 to 187 (VSYE…SASL), 208 to 228 (FLSW…ISGL), 261 to 281 (FFLA…ILFL), 296 to 316 (IPGW…FLWV), and 331 to 351 (LGWK…GAWM).

Belongs to the complex I subunit 1 family. NDH-1 is composed of 14 different subunits. Subunits NuoA, H, J, K, L, M, N constitute the membrane sector of the complex.

The protein resides in the cell inner membrane. It carries out the reaction a quinone + NADH + 5 H(+)(in) = a quinol + NAD(+) + 4 H(+)(out). NDH-1 shuttles electrons from NADH, via FMN and iron-sulfur (Fe-S) centers, to quinones in the respiratory chain. The immediate electron acceptor for the enzyme in this species is believed to be ubiquinone. Couples the redox reaction to proton translocation (for every two electrons transferred, four hydrogen ions are translocated across the cytoplasmic membrane), and thus conserves the redox energy in a proton gradient. This subunit may bind ubiquinone. This chain is NADH-quinone oxidoreductase subunit H, found in Polaromonas sp. (strain JS666 / ATCC BAA-500).